The primary structure comprises 92 residues: Small ribosomal subunit protein bS18 (92 aa).

Residues 1–28 (MTQQGNSGERKPRGKGPKRPRKPKVDPF) are disordered. Positions 12–22 (PRGKGPKRPRK) are enriched in basic residues.

The protein belongs to the bacterial ribosomal protein bS18 family. As to quaternary structure, part of the 30S ribosomal subunit. Forms a tight heterodimer with protein bS6.

Functionally, binds as a heterodimer with protein bS6 to the central domain of the 16S rRNA, where it helps stabilize the platform of the 30S subunit. The sequence is that of Small ribosomal subunit protein bS18 from Deinococcus radiodurans (strain ATCC 13939 / DSM 20539 / JCM 16871 / CCUG 27074 / LMG 4051 / NBRC 15346 / NCIMB 9279 / VKM B-1422 / R1).